A 146-amino-acid polypeptide reads, in one-letter code: Large ribosomal subunit protein bL9 (146 aa).

Belongs to the bacterial ribosomal protein bL9 family.

Binds to the 23S rRNA. This is Large ribosomal subunit protein bL9 from Deinococcus deserti (strain DSM 17065 / CIP 109153 / LMG 22923 / VCD115).